The following is a 598-amino-acid chain: Elongation factor 4 (598 aa).

A tr-type G domain is found at 3-185 (QHIRNFSIIA…MIVARIPPPE (183 aa)). GTP-binding positions include 15 to 20 (DHGKST) and 132 to 135 (NKID).

It belongs to the TRAFAC class translation factor GTPase superfamily. Classic translation factor GTPase family. LepA subfamily.

The protein localises to the cell inner membrane. The catalysed reaction is GTP + H2O = GDP + phosphate + H(+). Functionally, required for accurate and efficient protein synthesis under certain stress conditions. May act as a fidelity factor of the translation reaction, by catalyzing a one-codon backward translocation of tRNAs on improperly translocated ribosomes. Back-translocation proceeds from a post-translocation (POST) complex to a pre-translocation (PRE) complex, thus giving elongation factor G a second chance to translocate the tRNAs correctly. Binds to ribosomes in a GTP-dependent manner. This chain is Elongation factor 4, found in Nitrosomonas eutropha (strain DSM 101675 / C91 / Nm57).